The chain runs to 334 residues: MNQAPVRVTVTGAAGRVAYALLFRIASGDMLGADQPVQLVLFDLPHAMKAMQGVVMELEDCAFPLLTEIIATDDPVLAFSDTQIALLVSARPRAVGAERLEVLADNAKIFAAQGAVIGRHANPDCKVLVVGNPCNTNACVAMKAAQKFSRIPARNFAALLRLDHNRALAQLALKTGRPVGGVKRLAVWGNHSPTVYADDRFTTIDGDSVPAIIDNIAWHHDTLVRTVDKRGEAILAARGLYAEASAASAAIDQMRDWWLGTRGEWTTMGVVSDGAYGVPAGLVFGFPVITDCRDYRIVPGLAVDAFARGMIDVNVRELTAELEIVKPLLPELFG.

NAD(+) is bound at residue 12 to 18; sequence GAAGRVA. Substrate is bound by residues arginine 93 and arginine 99. NAD(+)-binding positions include asparagine 106, glutamine 113, and 130-132; that span reads VGN. Positions 132 and 166 each coordinate substrate. Histidine 191 functions as the Proton acceptor in the catalytic mechanism.

The protein belongs to the LDH/MDH superfamily. MDH type 2 family.

The enzyme catalyses (S)-malate + NAD(+) = oxaloacetate + NADH + H(+). Its function is as follows. Catalyzes the reversible oxidation of malate to oxaloacetate. In Albidiferax ferrireducens (strain ATCC BAA-621 / DSM 15236 / T118) (Rhodoferax ferrireducens), this protein is Malate dehydrogenase 2.